The primary structure comprises 310 residues: Endo-1,4-beta-xylanase B (310 aa).

The signal sequence occupies residues 1–19 (MISLSSVAIALTTVVGALA). Residues 33 to 223 (AITSSQTGTN…SSGSASMTVS (191 aa)) enclose the GH11 domain. Catalysis depends on Glu-119, which acts as the Nucleophile. Glu-210 (proton donor) is an active-site residue. Residues 218–227 (ASMTVSAGSS) show a composition bias toward low complexity. The interval 218-274 (ASMTVSAGSSSSGGSGSGSGSGSGSGSGSGSQTTTAGSSTGTGTGSGSGSGSGGSGG) is disordered. The span at 228–246 (SSGGSGSGSGSGSGSGSGS) shows a compositional bias: gly residues. Residues 247–256 (GSQTTTAGSS) are compositionally biased toward low complexity. Residues 257-274 (TGTGTGSGSGSGSGGSGG) show a composition bias toward gly residues. A CBM1 domain is found at 275–310 (NCAAQWGQCGGQGWNGPTCCSSGTCKASNQWYSQCL).

This sequence belongs to the glycosyl hydrolase 11 (cellulase G) family.

The protein localises to the secreted. It carries out the reaction Endohydrolysis of (1-&gt;4)-beta-D-xylosidic linkages in xylans.. It participates in glycan degradation; xylan degradation. Endo-1,4-beta-xylanase involved in the hydrolysis of xylan, a major structural heterogeneous polysaccharide found in plant biomass representing the second most abundant polysaccharide in the biosphere, after cellulose. Hydrolyzes birchwood xylan, beechwood xylan, and oat spelt xylan to produce short-chain xylooligosaccharides, xylopentaose, xylotriose, and xylobiose as the main products. The protein is Endo-1,4-beta-xylanase B (xynB) of Penicillium oxalicum.